The primary structure comprises 224 residues: MEKLLCFLVLTSLSHAFGQTDMSRKAFVFPKESDTSYVSLKAPLTKPLKAFTVCLHFYTELSSTRGYSIFSYATKRQDNEILIFWSKDIGYSFTVGGSEILFEVPEVTVAPVHICTSWESASGIVEFWVDGKPRVRKSLKKGYTVGAEASIILGQEQDSFGGNFEGSQSLVGDIGNVNMWDFVLSPDEINTIYLGGPFSPNVLNWRALKYEVQGEVFTKPQLWP.

An N-terminal signal peptide occupies residues Met1–Gly18. At Gln19 the chain carries Pyrrolidone carboxylic acid. The region spanning Ser23 to Pro224 is the Pentraxin (PTX) domain. Cys54 and Cys115 form a disulfide bridge. Positions 78, 79, 156, 157, 158, and 168 each coordinate Ca(2+).

Belongs to the pentraxin family. Homopentamer. Pentraxin (or pentaxin) have a discoid arrangement of 5 non-covalently bound subunits. Interacts with FCN1; may regulate monocyte activation by FCN1. Ca(2+) serves as cofactor. As to expression, found in plasma.

The protein resides in the secreted. Its function is as follows. Displays several functions associated with host defense: it promotes agglutination, bacterial capsular swelling, phagocytosis and complement fixation through its calcium-dependent binding to phosphorylcholine. Can interact with DNA and histones and may scavenge nuclear material released from damaged circulating cells. This chain is C-reactive protein (CRP), found in Homo sapiens (Human).